We begin with the raw amino-acid sequence, 399 residues long: Na(+)/H(+) antiporter NhaA (399 aa).

11 consecutive transmembrane segments (helical) span residues 12 to 32 (LDIA…IAAN), 60 to 80 (LLLW…GLEI), 94 to 114 (LAAL…LIYA), 126 to 146 (GWAI…TLLG), 155 to 175 (IFLT…IAFF), 178 to 198 (ASLS…LIGL), 206 to 226 (LWPY…SGVH), 263 to 283 (PWVT…VSLA), 284 to 304 (GLPP…GLFL), 336 to 356 (GVAL…TLAF), and 372 to 392 (LGVL…LRLS).

This sequence belongs to the NhaA Na(+)/H(+) (TC 2.A.33) antiporter family.

It is found in the cell inner membrane. The catalysed reaction is Na(+)(in) + 2 H(+)(out) = Na(+)(out) + 2 H(+)(in). Its function is as follows. Na(+)/H(+) antiporter that extrudes sodium in exchange for external protons. In Rhodospirillum rubrum (strain ATCC 11170 / ATH 1.1.1 / DSM 467 / LMG 4362 / NCIMB 8255 / S1), this protein is Na(+)/H(+) antiporter NhaA.